The sequence spans 393 residues: MKRPVTGKDLMIVNMGPHHPSMHGVLRLIVTLDGEDVVDCEPILGYLHRGMEKIAENRAIIQYLPYVTRWDYLATMFTEAITVNGPEQLGNIQVPKRASYIRVIMLELSRIASHLLWLGPFMADIGAQTPFFYIFREREFVYDLFEAATGMRMMHNFFRIGGIAADLPYGWIDKCLDFCDYFLTEVVEYQKLITRNPIFLERVEGVGIIGGEEAINWGLSGPMLRASGIPWDLRKVDRYESYDEFEWEIQWQKQGDSLARYLVRLSEMTESIKIIQQALEGLPGGPYENLESRSFDRKRNPEWNDFDYRFISKKPSPTFELSKQELYVRVEAPKGELGIFLIGDQSGFPWRWKIRPPGFINLQILPELVKRMKLADIMTILGSIDIIMGEVDR.

Belongs to the complex I 49 kDa subunit family. NDH is composed of at least 16 different subunits, 5 of which are encoded in the nucleus.

The protein resides in the plastid. The protein localises to the chloroplast thylakoid membrane. It carries out the reaction a plastoquinone + NADH + (n+1) H(+)(in) = a plastoquinol + NAD(+) + n H(+)(out). The enzyme catalyses a plastoquinone + NADPH + (n+1) H(+)(in) = a plastoquinol + NADP(+) + n H(+)(out). Its function is as follows. NDH shuttles electrons from NAD(P)H:plastoquinone, via FMN and iron-sulfur (Fe-S) centers, to quinones in the photosynthetic chain and possibly in a chloroplast respiratory chain. The immediate electron acceptor for the enzyme in this species is believed to be plastoquinone. Couples the redox reaction to proton translocation, and thus conserves the redox energy in a proton gradient. The polypeptide is NAD(P)H-quinone oxidoreductase subunit H, chloroplastic (Lepidium virginicum (Virginia pepperweed)).